The primary structure comprises 257 residues: Phosphonates import ATP-binding protein PhnC (257 aa).

Residues 4–248 (IEFKNVSKVY…VFSEIYGRTI (245 aa)) form the ABC transporter domain. Residue 37–44 (GLSGAGKS) coordinates ATP.

Belongs to the ABC transporter superfamily. Phosphonates importer (TC 3.A.1.9.1) family. As to quaternary structure, the complex is composed of two ATP-binding proteins (PhnC), two transmembrane proteins (PhnE) and a solute-binding protein (PhnD).

The protein localises to the cell membrane. The enzyme catalyses phosphonate(out) + ATP + H2O = phosphonate(in) + ADP + phosphate + H(+). Its function is as follows. Part of the ABC transporter complex PhnCDE involved in phosphonates import. Responsible for energy coupling to the transport system. In Staphylococcus aureus (strain COL), this protein is Phosphonates import ATP-binding protein PhnC.